A 218-amino-acid chain; its full sequence is Large ribosomal subunit protein bL25 (218 aa).

Residues 186-218 (AVEEEVPAEDEEIMPEPEVIGEEDEGDEEEPEE) form a disordered region.

Belongs to the bacterial ribosomal protein bL25 family. CTC subfamily. In terms of assembly, part of the 50S ribosomal subunit; part of the 5S rRNA/L5/L18/L25 subcomplex. Contacts the 5S rRNA. Binds to the 5S rRNA independently of L5 and L18.

Its function is as follows. This is one of the proteins that binds to the 5S RNA in the ribosome where it forms part of the central protuberance. This is Large ribosomal subunit protein bL25 from Halothermothrix orenii (strain H 168 / OCM 544 / DSM 9562).